The primary structure comprises 118 residues: Elongin-B (118 aa).

The residue at position 1 (Met-1) is an N-acetylmethionine. One can recognise a Ubiquitin-like domain in the interval 1–66; the sequence is MDVFLMIRRH…LGECGFTSQT (66 aa). At Thr-84 the chain carries Phosphothreonine. Residues 92–118 form a disordered region; that stretch reads PFSSPPELPDVMKPQDSGSSANEQAVQ. Positions 107-118 are enriched in polar residues; sequence DSGSSANEQAVQ. Phosphoserine is present on residues Ser-108 and Ser-111.

Belongs to the Elongin B family. In terms of assembly, heterotrimer of an A (ELOA, ELOA2 or ELOA3P), ELOB and ELOC subunit. The elongin BC complex interacts with EPOP; leading to recruit the elongin BC complex to Polycomb group (PcG) target genes, thereby restricting excessive activity of the PRC2/EED-EZH2 complex. Component of multiple cullin-RING E3 ubiquitin-protein ligase complexes composed of Elongin BC (ELOB and ELOC), a cullin (either CUL2 or CUL5), a catalytic subunit (either RBX1 or RNF7/RBX2), as well as a substrate adapter protein that can be either ASB2, ASB9, ASB11, KLHDC2, KLHDC3, KLHDC10, APPBP2, FEM1A, FEM1B, FEM1C, LRR1, PCMTD1, SOCS1, SOCS2, SOCS5, SPSB1, SPSB3, ELOA, VHL, WSB1 or RAB40C. As part of the Elongin BC E3 ubiquitin ligase complex; interacts with NRBP1. May also interact with DCUN1D1, DCUN1D2, DCUN1D3 and DCUN1D5. May form oligomers as a KLHDC2/KLHDC3-ELOB-ELOC complex; this interaction is autoinhibitory for the E3 ligase complex as the substrate-binding site of KLHDC2/KLHDC3 is blocked in the oligomer. (Microbial infection) Following infection by HIV-1 virus, component of a cullin-5-RING E3 ubiquitin-protein ligase complex (ECS complex) hijacked by the HIV-1 Vif protein. As to quaternary structure, (Microbial infection) Substrate adapter protein can be a viral protein such as HIV Vif. In terms of assembly, (Microbial infection) Interacts with molluscum contagiosum virus MC132. (Microbial infection) Interacts with herpes virus 8 virus protein LANA1.

It localises to the nucleus. Its pathway is protein modification; protein ubiquitination. In terms of biological role, SIII, also known as elongin, is a general transcription elongation factor that increases the RNA polymerase II transcription elongation past template-encoded arresting sites. Subunit A is transcriptionally active and its transcription activity is strongly enhanced by binding to the dimeric complex of the SIII regulatory subunits B and C (elongin BC complex). In embryonic stem cells, the elongin BC complex is recruited by EPOP to Polycomb group (PcG) target genes in order generate genomic region that display both active and repressive chromatin properties, an important feature of pluripotent stem cells. Functionally, core component of multiple cullin-2 and cullin-5-RING E3 ubiquitin-protein ligase complexes (ECS complexes), which mediate the ubiquitination of target proteins. By binding to BC-box motifs it seems to link target recruitment subunits, like VHL and members of the SOCS box family, to Cullin/RBX1 modules that activate E2 ubiquitination enzymes. Component the von Hippel-Lindau ubiquitination complex CBC(VHL). A number of ECS complexes (containing either KLHDC2, KLHDC3, KLHDC10, APPBP2, FEM1A, FEM1B or FEM1C as substrate-recognition component) are part of the DesCEND (destruction via C-end degrons) pathway, which recognizes a C-degron located at the extreme C terminus of target proteins, leading to their ubiquitination and degradation. The ECS(ASB9) complex mediates ubiquitination and degradation of CKB. As part of a multisubunit ubiquitin ligase complex, polyubiquitinates monoubiquitinated POLR2A. ECS(LRR1) ubiquitinates MCM7 and promotes CMG replisome disassembly by VCP and chromatin extraction during S-phase. As part of the ECS(RAB40C) complex, mediates ANKRD28 ubiquitination and degradation, thereby inhibiting protein phosphatase 6 (PP6) complex activity and focal adhesion assembly during cell migration. (Microbial infection) Following infection by HIV-1 virus, component of a cullin-5-RING E3 ubiquitin-protein ligase complex (ECS complex) hijacked by the HIV-1 Vif protein, which catalyzes ubiquitination and degradation of APOBEC3F and APOBEC3G. The complex can also ubiquitinate APOBEC3H to some extent. The chain is Elongin-B from Homo sapiens (Human).